A 245-amino-acid chain; its full sequence is MSSESEKDKERLIQAAKMFFFHVQDLASVINTLTELFSRSMNTQILLMAVKNNSYIKDFFEQMLKIFKEMQSVVDARHDKIQKESLCSKVAMAMCSVVQKSTNVEELHQSAKEVFKSAHTPVIISVLNSSNILGSLESSLSHLMKFPIMNLQLSDFYTEDTKEQSDVTTSERTRSPPGSSKTTMIDTLKKLQDVLKTEDSKNPTKSAADLLEQIVKAMGPILEILQKAIKTMEMNISVFKKASDK.

Residues 162–174 (KEQSDVTTSERTR) are compositionally biased toward basic and acidic residues. Residues 162 to 183 (KEQSDVTTSERTRSPPGSSKTT) are disordered.

This is an uncharacterized protein from Homo sapiens (Human).